A 274-amino-acid polypeptide reads, in one-letter code: Ribosomal RNA small subunit methyltransferase A (274 aa).

Positions 15, 17, 42, 64, 89, and 109 each coordinate S-adenosyl-L-methionine.

It belongs to the class I-like SAM-binding methyltransferase superfamily. rRNA adenine N(6)-methyltransferase family. RsmA subfamily.

Its subcellular location is the cytoplasm. It catalyses the reaction adenosine(1518)/adenosine(1519) in 16S rRNA + 4 S-adenosyl-L-methionine = N(6)-dimethyladenosine(1518)/N(6)-dimethyladenosine(1519) in 16S rRNA + 4 S-adenosyl-L-homocysteine + 4 H(+). Its function is as follows. Specifically dimethylates two adjacent adenosines (A1518 and A1519) in the loop of a conserved hairpin near the 3'-end of 16S rRNA in the 30S particle. May play a critical role in biogenesis of 30S subunits. In Synechococcus sp. (strain CC9902), this protein is Ribosomal RNA small subunit methyltransferase A.